An 81-amino-acid polypeptide reads, in one-letter code: Photosystem I iron-sulfur center (81 aa).

2 4Fe-4S ferredoxin-type domains span residues 2 to 31 and 37 to 68; these read SHAVKIYDTCIGCTQCVRACPLDVLEMVPW and GQIASSPRTEDCVGCKRCETACPTDFLSIRVY. [4Fe-4S] cluster is bound by residues Cys-11, Cys-14, Cys-17, Cys-21, Cys-48, Cys-51, Cys-54, and Cys-58.

The cyanobacterial PSI reaction center is composed of one copy each of PsaA,B,C,D,E,F,I,J,K,L,M and X, and forms trimeric complexes. It depends on [4Fe-4S] cluster as a cofactor.

It localises to the cellular thylakoid membrane. The catalysed reaction is reduced [plastocyanin] + hnu + oxidized [2Fe-2S]-[ferredoxin] = oxidized [plastocyanin] + reduced [2Fe-2S]-[ferredoxin]. In terms of biological role, apoprotein for the two 4Fe-4S centers FA and FB of photosystem I (PSI); essential for photochemical activity. FB is the terminal electron acceptor of PSI, donating electrons to ferredoxin. The C-terminus interacts with PsaA/B/D and helps assemble the protein into the PSI complex. Required for binding of PsaD and PsaE to PSI. PSI is a plastocyanin/cytochrome c6-ferredoxin oxidoreductase, converting photonic excitation into a charge separation, which transfers an electron from the donor P700 chlorophyll pair to the spectroscopically characterized acceptors A0, A1, FX, FA and FB in turn. In Synechococcus sp. (strain WH7803), this protein is Photosystem I iron-sulfur center.